Reading from the N-terminus, the 948-residue chain is Sensor histidine kinase RcsC (948 aa).

At 1–20 the chain is on the cytoplasmic side; the sequence is MKYLASFRTTLKVSRYLFRA. A helical membrane pass occupies residues 21–41; sequence LALLIWLLIAFVSVFYIVNAL. Over 42 to 313 the chain is Periplasmic; that stretch reads HQRESEIRQE…PVDLVLERIR (272 aa). A helical transmembrane segment spans residues 314 to 334; it reads ILILNAILLNVLVGAGLFTLA. The Cytoplasmic segment spans residues 335–948; that stretch reads RMYERRIFIP…YAERVRKTRA (614 aa). The PAS domain occupies 357-425; that stretch reads QFNRKIVASA…VLTSNNTNLQ (69 aa). Residues 476–692 enclose the Histidine kinase domain; it reads TVSHELRTPL…QFTLRIPLYG (217 aa). His479 is modified (phosphohistidine; by autocatalysis). Residues 705-805 enclose the ABL domain; the sequence is AGTCCWLAVR…ARIYSIELDS (101 aa). In terms of domain architecture, Response regulatory spans 826-940; it reads MILVVDDHPI…VLKQTLAVYA (115 aa). Asp875 carries the post-translational modification 4-aspartylphosphate.

Belongs to the RcsC family. As to quaternary structure, interacts with RcsD. In terms of processing, autophosphorylated. Activation probably requires a transfer of a phosphate group from a His in the transmitter domain to an Asp in the receiver domain.

The protein localises to the cell inner membrane. It catalyses the reaction ATP + protein L-histidine = ADP + protein N-phospho-L-histidine.. Component of the Rcs signaling system, which controls transcription of numerous genes. RcsC functions as a membrane-associated protein kinase that phosphorylates RcsD in response to environmental signals. The phosphoryl group is then transferred to the response regulator RcsB. This is Sensor histidine kinase RcsC from Salmonella typhimurium (strain LT2 / SGSC1412 / ATCC 700720).